The primary structure comprises 201 residues: Large ribosomal subunit protein bL12m (201 aa).

The N-terminal 38 residues, 1 to 38 (MLPVAASRCLWGPRLGLRGAALRLARQQMPSVCAARQL), are a transit peptide targeting the mitochondrion. 2 disordered regions span residues 37–60 (QLRS…APKE) and 109–130 (VSAA…QKER). Lys-128, Lys-141, Lys-145, and Lys-147 each carry N6-acetyllysine. Residue Lys-153 is modified to N6-acetyllysine; alternate. At Lys-153 the chain carries N6-succinyllysine; alternate. Lys-153 is covalently cross-linked (Glycyl lysine isopeptide (Lys-Gly) (interchain with G-Cter in ubiquitin)). N6-succinyllysine is present on Lys-165. N6-acetyllysine is present on residues Lys-166 and Lys-176. N6-acetyllysine; alternate is present on Lys-181. Position 181 is an N6-succinyllysine; alternate (Lys-181). The residue at position 188 (Lys-188) is an N6-acetyllysine.

The protein belongs to the bacterial ribosomal protein bL12 family. Component of the mitochondrial ribosome large subunit (39S) which comprises a 16S rRNA and about 50 distinct proteins. Interacts with NOA1. Post-translationally, two mature forms are produced by differential two-step proteolytic cleavage. Cleaved by the mitochondrial processing protease to produce the long mature form and subsequently by the mitochondrial intermediate protease to produce the short mature form. In the presence of CUL3, undergoes 'Lys-63'-linked ubiquitination at Lys-153 which results in proteasomal degradation.

It is found in the mitochondrion matrix. In terms of biological role, as a component of the mitochondrial large ribosomal subunit, plays a role in mitochondrial translation. When present in mitochondria as a free protein not associated with the ribosome, associates with mitochondrial RNA polymerase POLRMT to activate transcription. Required for POLRMT stability. This Mus musculus (Mouse) protein is Large ribosomal subunit protein bL12m (Mrpl12).